Consider the following 294-residue polypeptide: Type I ribosome-inactivating protein trichoanguina (294 aa).

The first 19 residues, 1-19 (MALSFFFLAISLGSPTAIG), serve as a signal peptide directing secretion. Asn-70 carries N-linked (GlcNAc...) asparagine glycosylation. Active-site residues include Glu-177 and Arg-180. Asn-220 is a glycosylation site (N-linked (GlcNAc...) asparagine). Positions 265–294 (VGSEYDIPTTILHPGAMGMLHNQNGNYVTM) are excised as a propeptide.

The protein belongs to the ribosome-inactivating protein family. Type 1 RIP subfamily.

It carries out the reaction Endohydrolysis of the N-glycosidic bond at one specific adenosine on the 28S rRNA.. Its function is as follows. Inhibits protein synthesis by depurinating 28S rRNA in ribosomes. The sequence is that of Type I ribosome-inactivating protein trichoanguina (TCA) from Trichosanthes anguina (Snake gourd).